The following is a 348-amino-acid chain: Phenylalanine--tRNA ligase alpha subunit (348 aa).

Glu-259 serves as a coordination point for Mg(2+).

Belongs to the class-II aminoacyl-tRNA synthetase family. Phe-tRNA synthetase alpha subunit type 1 subfamily. Tetramer of two alpha and two beta subunits. It depends on Mg(2+) as a cofactor.

The protein resides in the cytoplasm. It carries out the reaction tRNA(Phe) + L-phenylalanine + ATP = L-phenylalanyl-tRNA(Phe) + AMP + diphosphate + H(+). This Enterococcus faecalis (strain ATCC 700802 / V583) protein is Phenylalanine--tRNA ligase alpha subunit.